Consider the following 176-residue polypeptide: Ribosome rescue factor SmrB (176 aa).

The Smr domain occupies 98–173 (LDLHGLTQKQ…GTAALLLLIE (76 aa)).

It belongs to the SmrB family. Associates with collided ribosomes, but not with correctly translating polysomes.

Its function is as follows. Acts as a ribosome collision sensor. Detects stalled/collided disomes (pairs of ribosomes where the leading ribosome is stalled and a second ribosome has collided with it) and endonucleolytically cleaves mRNA at the 5' boundary of the stalled ribosome. Stalled/collided disomes form a new interface (primarily via the 30S subunits) that binds SmrB. Cleaved mRNA becomes available for tmRNA ligation, leading to ribosomal subunit dissociation and rescue of stalled ribosomes. The polypeptide is Ribosome rescue factor SmrB (Yersinia pseudotuberculosis serotype O:1b (strain IP 31758)).